We begin with the raw amino-acid sequence, 558 residues long: DNA ligase B (558 aa).

The N6-AMP-lysine intermediate role is filled by K124.

Belongs to the NAD-dependent DNA ligase family. LigB subfamily.

The catalysed reaction is NAD(+) + (deoxyribonucleotide)n-3'-hydroxyl + 5'-phospho-(deoxyribonucleotide)m = (deoxyribonucleotide)n+m + AMP + beta-nicotinamide D-nucleotide.. In terms of biological role, catalyzes the formation of phosphodiester linkages between 5'-phosphoryl and 3'-hydroxyl groups in double-stranded DNA using NAD as a coenzyme and as the energy source for the reaction. The protein is DNA ligase B of Klebsiella pneumoniae (strain 342).